We begin with the raw amino-acid sequence, 479 residues long: Ribosomal RNA small subunit methyltransferase F (479 aa).

Residues 125–131, Glu149, Asp176, and Asp194 each bind S-adenosyl-L-methionine; that span reads AAAPGSK. The Nucleophile role is filled by Cys247.

This sequence belongs to the class I-like SAM-binding methyltransferase superfamily. RsmB/NOP family.

The protein localises to the cytoplasm. It carries out the reaction cytidine(1407) in 16S rRNA + S-adenosyl-L-methionine = 5-methylcytidine(1407) in 16S rRNA + S-adenosyl-L-homocysteine + H(+). In terms of biological role, specifically methylates the cytosine at position 1407 (m5C1407) of 16S rRNA. This chain is Ribosomal RNA small subunit methyltransferase F (rsmF), found in Escherichia coli (strain K12).